Reading from the N-terminus, the 301-residue chain is 2-phosphoglycerate kinase (301 aa).

The ATP-cone domain occupies 2–89; that stretch reads IRVIEKGDKV…FWRRFRKMKV (88 aa).

Belongs to the 2-phosphoglycerate kinase family. It depends on a divalent metal cation as a cofactor.

It carries out the reaction (2R)-2-phosphoglycerate + ATP = (2R)-2,3-bisphosphoglycerate + ADP + H(+). The protein operates within thermoadapter biosynthesis; cyclic 2,3-diphosphoglycerate biosynthesis; cyclic 2,3-diphosphoglycerate from 2-phospho-D-glycerate: step 1/2. Its function is as follows. Catalyzes the phosphorylation of 2-phosphoglycerate to 2,3-diphosphoglycerate. Involved in the biosynthesis of cyclic 2,3-bisphosphoglycerate, a thermoprotectant. This Pyrococcus horikoshii (strain ATCC 700860 / DSM 12428 / JCM 9974 / NBRC 100139 / OT-3) protein is 2-phosphoglycerate kinase.